A 478-amino-acid polypeptide reads, in one-letter code: Alpha,alpha-trehalose-phosphate synthase [UDP-forming] (478 aa).

Residues tyrosine 89 and aspartate 143 each coordinate D-glucose 6-phosphate. Positions 280 and 285 each coordinate UDP. 2 residues coordinate UDP-alpha-D-glucose: arginine 280 and lysine 285. Arginine 318 contacts D-glucose 6-phosphate. Residues isoleucine 357 and 383–387 contribute to the UDP site; that span reads LVSYE. Residues isoleucine 357 and 379–387 contribute to the UDP-alpha-D-glucose site; that span reads DGMNLVSYE.

It belongs to the glycosyltransferase 20 family.

The enzyme catalyses D-glucose 6-phosphate + UDP-alpha-D-glucose = alpha,alpha-trehalose 6-phosphate + UDP + H(+). Its pathway is carbohydrate biosynthesis. Its activity is regulated as follows. Inhibited by validoxylamine A, a non-reactive trehalose analog. Its function is as follows. Synthase catalytic subunit of the trehalose synthase complex that catalyzes the production of trehalose from glucose-6-phosphate and UDP-alpha-D-glucose in a two step process. This chain is Alpha,alpha-trehalose-phosphate synthase [UDP-forming], found in Candida albicans (strain SC5314 / ATCC MYA-2876) (Yeast).